Reading from the N-terminus, the 504-residue chain is Flavin-dependent halogenase armH3 (504 aa).

Glycine 16, alanine 19, glutamate 49, and alanine 149 together coordinate FAD. Residues serine 329 and glycine 330 each coordinate chloride. Isoleucine 331 serves as a coordination point for FAD. The segment at 444-475 (NNLRTPVDTGAADVKAKHAPSETDAQNPLQSM) is disordered.

It belongs to the flavin-dependent halogenase family.

The catalysed reaction is melleolide F + FADH2 + chloride + O2 = 6'-chloromelleolide F + FAD + 2 H2O + H(+). Flavin-dependent halogenase involved in the biosynthesis of melleolides, a range of antifungal and phytotoxic polyketide derivatives composed of an orsellinic acid (OA) moiety esterified to various sesquiterpene alcohols. The halogenase catalyzes the transfer of a single chlorine atom to the melleolide backbone, resulting in a 6'-chloromelleolide product. The enzyme acts on free substrate and does not depend on carrier-protein-dependent acceptor molecules. This chain is Flavin-dependent halogenase armH3, found in Armillaria mellea (Honey mushroom).